Consider the following 152-residue polypeptide: Xanthine-guanine phosphoribosyltransferase (152 aa).

Residues R37–G38, R69, and D88–T96 contribute to the 5-phospho-alpha-D-ribose 1-diphosphate site. Position 69 (R69) interacts with GMP. Residue D89 coordinates Mg(2+). Guanine is bound by residues D92 and I135. Positions 92 and 135 each coordinate xanthine. Residues D92 to T96 and W134 to I135 each bind GMP.

It belongs to the purine/pyrimidine phosphoribosyltransferase family. XGPT subfamily. Homotetramer. Mg(2+) is required as a cofactor.

Its subcellular location is the cell inner membrane. It carries out the reaction GMP + diphosphate = guanine + 5-phospho-alpha-D-ribose 1-diphosphate. The catalysed reaction is XMP + diphosphate = xanthine + 5-phospho-alpha-D-ribose 1-diphosphate. It catalyses the reaction IMP + diphosphate = hypoxanthine + 5-phospho-alpha-D-ribose 1-diphosphate. It participates in purine metabolism; GMP biosynthesis via salvage pathway; GMP from guanine: step 1/1. Its pathway is purine metabolism; XMP biosynthesis via salvage pathway; XMP from xanthine: step 1/1. Its function is as follows. Purine salvage pathway enzyme that catalyzes the transfer of the ribosyl-5-phosphate group from 5-phospho-alpha-D-ribose 1-diphosphate (PRPP) to the N9 position of the 6-oxopurines guanine and xanthine to form the corresponding ribonucleotides GMP (guanosine 5'-monophosphate) and XMP (xanthosine 5'-monophosphate), with the release of PPi. To a lesser extent, also acts on hypoxanthine. The sequence is that of Xanthine-guanine phosphoribosyltransferase from Yersinia pseudotuberculosis serotype O:1b (strain IP 31758).